Reading from the N-terminus, the 889-residue chain is Mixed-linked glucan synthase 2 (889 aa).

The segment at 34-53 is disordered; it reads AGADGQNGRRSPVAKRVNDG. 2 helical membrane passes run 93-113 and 123-143; these read ILHP…AFFA and GVWL…SWVL. The active site involves Asp-213. The stretch at 265–293 forms a coiled coil; sequence ELMSDHRRVRREYEEFKVRIDSLSSTIRQ. Substrate is bound by residues Asp-411 and Asp-413. Asp-579 is a catalytic residue. 6 helical membrane-spanning segments follow: residues 655–675, 685–705, 723–743, 777–797, 811–831, and 842–862; these read TYPI…MWLI, FGEY…IGMF, FYMI…ALKL, LLIP…VAVG, LAVL…PFAL, and AVLF…YVAF.

This sequence belongs to the glycosyltransferase 2 family. Plant cellulose synthase-like F subfamily.

It is found in the golgi apparatus membrane. Functionally, catalyzes both beta-1,3 and beta-1,4 glycosidic linkage on beta-D-glucan. Essential for (1,3;1,4)-beta-D-glucans synthesis in grasses and cereals (Poaceae). The mixed-linked glucans (which are not present in walls of dicotyledons or most other monocotyledonous plants) are particularly important constituents of the walls of the starchy endosperm and aleurone cells of cereal grains such as oats, wheat, rice and barley. They can account for up to 70% by weight of the wall. The sequence is that of Mixed-linked glucan synthase 2 (CSLF2) from Oryza sativa subsp. japonica (Rice).